The chain runs to 433 residues: Energy-coupling factor transporter ATP-binding protein EcfA2 (433 aa).

One can recognise an ABC transporter domain in the interval Val25–Gln389. Gly62–Ser69 lines the ATP pocket.

It belongs to the ABC transporter superfamily. Energy-coupling factor EcfA family. In terms of assembly, forms a stable energy-coupling factor (ECF) transporter complex composed of 2 membrane-embedded substrate-binding proteins (S component), 2 ATP-binding proteins (A component) and 2 transmembrane proteins (T component).

It localises to the cell membrane. ATP-binding (A) component of a common energy-coupling factor (ECF) ABC-transporter complex. Unlike classic ABC transporters this ECF transporter provides the energy necessary to transport a number of different substrates. In Ureaplasma parvum serovar 3 (strain ATCC 700970), this protein is Energy-coupling factor transporter ATP-binding protein EcfA2.